The primary structure comprises 233 residues: Ribitol-5-phosphate cytidylyltransferase (233 aa).

CTP contacts are provided by residues 7–10 (LAGG) and 80–86 (GADRNET).

Belongs to the IspD/TarI cytidylyltransferase family. TarI subfamily.

It catalyses the reaction D-ribitol 5-phosphate + CTP + H(+) = CDP-L-ribitol + diphosphate. The protein operates within cell wall biogenesis; poly(ribitol phosphate) teichoic acid biosynthesis. Functionally, catalyzes the transfer of the cytidylyl group of CTP to D-ribitol 5-phosphate. In Lactiplantibacillus plantarum (strain ATCC BAA-793 / NCIMB 8826 / WCFS1) (Lactobacillus plantarum), this protein is Ribitol-5-phosphate cytidylyltransferase.